Consider the following 416-residue polypeptide: Secreted RxLR effector protein 25 (416 aa).

The signal sequence occupies residues 1 to 20; the sequence is MRSWLLLLVGLSSYFALSTS. The RxLR-dEER signature appears at 49–88; it reads RKLRAPGGDTNTLKDSGKARREKKVWKLFCRVFLQLDDEK.

The protein belongs to the RxLR effector family.

The protein localises to the secreted. Its subcellular location is the host cytoplasm. It localises to the host nucleus. Its function is as follows. Effector that partially suppresses the tobacco programmed cell death induced by cell death-inducing proteins. This Plasmopara viticola (Downy mildew of grapevine) protein is Secreted RxLR effector protein 25.